The sequence spans 650 residues: MRGIALFVAAVSLIVEGTAESSICSDFGNEFCRNAECEVVPGAEDDFVCKCPRDNMYFNAAEKQCEYKDTCKTRECSYGRCVESNPSKASCVCEASDDLTLQCKIKNDYATDCRNRGGTAKLRTDGFIGATCDCGEWGAMNMTTRNCVPTTCLRPDLTCKDLCEKNLLQRDSRCCQGWNTANCSAAPPADSYCSPGSPKGPDGQCINACKTKEAGFVCKHGCRSTGKAYECTCPSGSTVAEDGITCKSISHTVSCTAEQKQTCRPTEDCRVHKGTVLCECPWNQHLVGDTCISDCVDKKCHEEFMDCGVYMNRQSCYCPWKSRKPGPNVNINECLLNEYYYTVSFTPNISFDSDHCKWYEDRVLEAIRTSIGKEVFKVEILNCTQDIKARLIAEKPLSKHVLRKLQACEHPIGEWCMMYPKLLIKKNSATEIEEENLCDSLLKDQEAAYKGQNKCVKVDNLFWFQCADGYTTTYEMTRGRLRRSVCKAGVSCNENEQSECADKGQIFVYENGKANCQCPPDTKPGEIGCIERTTCNPKEIQECQDKKLECVYKNHKAECECPDDHECYREPAKDSCSEEDNGKCQSSGQRCVIENGKAVCKEKSEATTAATTTTKAKDKDPDPGKSSAAAVSATGLLLLLAATSVTAASL.

An N-terminal signal peptide occupies residues 1–19 (MRGIALFVAAVSLIVEGTA). EGF-like domains follow at residues 20–66 (ESSI…KQCE) and 67–104 (YKDTCKTRECSYGRCVESNPSKASCVCEASDDLTLQCK). 6 cysteine pairs are disulfide-bonded: cysteine 24-cysteine 37, cysteine 32-cysteine 49, cysteine 51-cysteine 65, cysteine 71-cysteine 81, cysteine 76-cysteine 91, and cysteine 93-cysteine 103. Asparagine 141 and asparagine 182 each carry an N-linked (GlcNAc...) asparagine glycan. 3 EGF-like domains span residues 205-247 (CINA…ITCK), 251-292 (HTVS…DTCI), and 291-335 (CISD…NECL). Intrachain disulfides connect cysteine 209–cysteine 222, cysteine 218–cysteine 231, cysteine 233–cysteine 246, cysteine 255–cysteine 269, cysteine 263–cysteine 278, cysteine 280–cysteine 291, cysteine 295–cysteine 307, cysteine 300–cysteine 316, and cysteine 318–cysteine 334. 2 N-linked (GlcNAc...) asparagine glycosylation sites follow: asparagine 348 and asparagine 382. EGF-like domains follow at residues 482-530 (RRSV…IGCI) and 531-568 (ERTTCNPKEIQECQDKKLECVYKNHKAECECPDDHECY). Intrachain disulfides connect cysteine 486–cysteine 500, cysteine 492–cysteine 516, cysteine 518–cysteine 529, cysteine 535–cysteine 550, cysteine 543–cysteine 559, and cysteine 561–cysteine 567. Positions 603–628 (KSEATTAATTTTKAKDKDPDPGKSSA) are disordered. Serine 627 carries GPI-anchor amidated serine lipidation. The propeptide at 628-650 (AAAVSATGLLLLLAATSVTAASL) is removed in mature form.

It localises to the cell membrane. The protein is Glycoprotein antigen BM86 of Rhipicephalus microplus (Cattle tick).